A 109-amino-acid polypeptide reads, in one-letter code: Cell division protein ZapA (109 aa).

Residues 21-99 adopt a coiled-coil conformation; it reads PEQRDALNQA…IEQALLEQGR (79 aa).

It belongs to the ZapA family. Type 1 subfamily. As to quaternary structure, homodimer. Interacts with FtsZ.

The protein resides in the cytoplasm. In terms of biological role, activator of cell division through the inhibition of FtsZ GTPase activity, therefore promoting FtsZ assembly into bundles of protofilaments necessary for the formation of the division Z ring. It is recruited early at mid-cell but it is not essential for cell division. The chain is Cell division protein ZapA from Klebsiella pneumoniae (strain 342).